The primary structure comprises 99 residues: NADH-quinone oxidoreductase subunit K (99 aa).

The next 3 membrane-spanning stretches (helical) occupy residues 2–22 (PVEY…LGVL), 28–48 (LILM…FLAF), and 60–80 (IAFF…AVVI).

The protein belongs to the complex I subunit 4L family. In terms of assembly, NDH-1 is composed of 14 different subunits. Subunits NuoA, H, J, K, L, M, N constitute the membrane sector of the complex.

It is found in the cell inner membrane. It carries out the reaction a quinone + NADH + 5 H(+)(in) = a quinol + NAD(+) + 4 H(+)(out). Functionally, NDH-1 shuttles electrons from NADH, via FMN and iron-sulfur (Fe-S) centers, to quinones in the respiratory chain. The immediate electron acceptor for the enzyme in this species is believed to be ubiquinone. Couples the redox reaction to proton translocation (for every two electrons transferred, four hydrogen ions are translocated across the cytoplasmic membrane), and thus conserves the redox energy in a proton gradient. The polypeptide is NADH-quinone oxidoreductase subunit K (Anaeromyxobacter dehalogenans (strain 2CP-1 / ATCC BAA-258)).